The sequence spans 237 residues: Cysteine-rich venom protein DIS1 (237 aa).

A signal peptide spans 1-18 (MFVFILLSLAAVLQQSFG). In terms of domain architecture, SCP spans 37 to 165 (VDKHNAFRRS…SYNYFYVCQY (129 aa)). 7 cysteine pairs are disulfide-bonded: Cys74/Cys152, Cys91/Cys166, Cys147/Cys163, Cys185/Cys192, Cys188/Cys197, Cys201/Cys234, and Cys219/Cys232. The ShKT domain maps to 201–234 (CSREDVFMNCKSLVAQSNCQDDYIRKNCPATCFC).

The protein belongs to the CRISP family. As to expression, expressed by the venom gland.

It localises to the secreted. Weakly blocks contraction of smooth muscle elicited by high potassium-induced depolarization, but does not block caffeine-stimulated contraction. May target voltage-gated calcium channels on smooth muscle. In Dispholidus typus (Boomslang), this protein is Cysteine-rich venom protein DIS1.